The primary structure comprises 380 residues: Histidinol-phosphate aminotransferase 1 (380 aa).

N6-(pyridoxal phosphate)lysine is present on lysine 235.

Belongs to the class-II pyridoxal-phosphate-dependent aminotransferase family. Histidinol-phosphate aminotransferase subfamily. As to quaternary structure, homodimer. It depends on pyridoxal 5'-phosphate as a cofactor.

The catalysed reaction is L-histidinol phosphate + 2-oxoglutarate = 3-(imidazol-4-yl)-2-oxopropyl phosphate + L-glutamate. It participates in amino-acid biosynthesis; L-histidine biosynthesis; L-histidine from 5-phospho-alpha-D-ribose 1-diphosphate: step 7/9. The polypeptide is Histidinol-phosphate aminotransferase 1 (Psychrobacter arcticus (strain DSM 17307 / VKM B-2377 / 273-4)).